Consider the following 214-residue polypeptide: Large ribosomal subunit protein uL16 (214 aa).

The residue at position 32 (Arg32) is a Citrulline. A Glycyl lysine isopeptide (Lys-Gly) (interchain with G-Cter in SUMO2) cross-link involves residue Lys175. Lys188 participates in a covalent cross-link: Glycyl lysine isopeptide (Lys-Gly) (interchain with G-Cter in ubiquitin).

It belongs to the universal ribosomal protein uL16 family. As to quaternary structure, component of the large ribosomal subunit. Mature ribosomes consist of a small (40S) and a large (60S) subunit. The 40S subunit contains about 33 different proteins and 1 molecule of RNA (18S). The 60S subunit contains about 49 different proteins and 3 molecules of RNA (28S, 5.8S and 5S). Post-translationally, citrullinated by PADI4. Ufmylated by UFL1.

It localises to the cytoplasm. In terms of biological role, component of the large ribosomal subunit. Plays a role in the formation of actively translating ribosomes. May play a role in the embryonic brain development. This chain is Large ribosomal subunit protein uL16, found in Homo sapiens (Human).